The following is a 299-amino-acid chain: Bifunctional protein FolD 2 (299 aa).

Residues 168 to 170 (GRS), Ser193, and Ile234 each bind NADP(+).

This sequence belongs to the tetrahydrofolate dehydrogenase/cyclohydrolase family. In terms of assembly, homodimer.

The catalysed reaction is (6R)-5,10-methylene-5,6,7,8-tetrahydrofolate + NADP(+) = (6R)-5,10-methenyltetrahydrofolate + NADPH. The enzyme catalyses (6R)-5,10-methenyltetrahydrofolate + H2O = (6R)-10-formyltetrahydrofolate + H(+). Its pathway is one-carbon metabolism; tetrahydrofolate interconversion. Functionally, catalyzes the oxidation of 5,10-methylenetetrahydrofolate to 5,10-methenyltetrahydrofolate and then the hydrolysis of 5,10-methenyltetrahydrofolate to 10-formyltetrahydrofolate. This is Bifunctional protein FolD 2 from Rhizobium meliloti (strain 1021) (Ensifer meliloti).